A 161-amino-acid polypeptide reads, in one-letter code: 3-isopropylmalate dehydratase small subunit (161 aa).

Belongs to the LeuD family. LeuD type 2 subfamily. In terms of assembly, heterodimer of LeuC and LeuD.

It catalyses the reaction (2R,3S)-3-isopropylmalate = (2S)-2-isopropylmalate. The protein operates within amino-acid biosynthesis; L-leucine biosynthesis; L-leucine from 3-methyl-2-oxobutanoate: step 2/4. Catalyzes the isomerization between 2-isopropylmalate and 3-isopropylmalate, via the formation of 2-isopropylmaleate. This chain is 3-isopropylmalate dehydratase small subunit (leuD), found in Pyrobaculum aerophilum (strain ATCC 51768 / DSM 7523 / JCM 9630 / CIP 104966 / NBRC 100827 / IM2).